The sequence spans 230 residues: uncharacterized protein (230 aa).

An ABC transporter domain is found at 2–230 (IQLSNVRKSY…ASSGQRSVGE (229 aa)). ATP is bound at residue 38–45 (GPSGSGKS).

Belongs to the ABC transporter superfamily. Part of a complex composed of YknX, YknY and YknZ. The complex interacts with YknW.

It is found in the cell membrane. In terms of biological role, part of an unusual four-component transporter, which is required for protection against the killing factor SdpC (sporulation-delaying protein). This is an uncharacterized protein from Bacillus subtilis (strain 168).